The chain runs to 272 residues: Putative pyruvate, phosphate dikinase regulatory protein (272 aa).

153 to 160 (GVSRTSKT) contacts ADP.

Belongs to the pyruvate, phosphate/water dikinase regulatory protein family. PDRP subfamily.

The catalysed reaction is N(tele)-phospho-L-histidyl/L-threonyl-[pyruvate, phosphate dikinase] + ADP = N(tele)-phospho-L-histidyl/O-phospho-L-threonyl-[pyruvate, phosphate dikinase] + AMP + H(+). It carries out the reaction N(tele)-phospho-L-histidyl/O-phospho-L-threonyl-[pyruvate, phosphate dikinase] + phosphate + H(+) = N(tele)-phospho-L-histidyl/L-threonyl-[pyruvate, phosphate dikinase] + diphosphate. Its function is as follows. Bifunctional serine/threonine kinase and phosphorylase involved in the regulation of the pyruvate, phosphate dikinase (PPDK) by catalyzing its phosphorylation/dephosphorylation. In Chelativorans sp. (strain BNC1), this protein is Putative pyruvate, phosphate dikinase regulatory protein.